A 332-amino-acid chain; its full sequence is MAVIYYDKDCDLSLIEKKLIGIVGYGAQGHAHAQNLRDSGLKVIVACVEGGRGWKKATADGFEVMCVAEMAKKADIIMMLAPDTSQAKIYKDSIEQGLKPGKMLMFAHGFNIHYGQIVPPSFVDVTMIAPKCPGYMLRQVFTEGAGAPSLIAVEQDASGKAKELALAYAKGIGSNRAGILETTFAEETETDLFGEQAVLCGGTTSLVKAGFETLVEAGYQPEVAYFECLHELKLIVDLMYQGGIAYMRDSISDTAKYGDFTRGPRVINEDTYETMGEILGEIQDGSFAKEWILENQAGRPVYNSLRRMESEHLIEEVGAELRSMMSWLKKKR.

Positions 1–182 (MAVIYYDKDC…GSNRAGILET (182 aa)) constitute a KARI N-terminal Rossmann domain. NADP(+)-binding positions include 25-28 (YGAQ) and 83-86 (DTSQ). Residue histidine 108 is part of the active site. Glycine 134 lines the NADP(+) pocket. Residues 183-328 (TFAEETETDL…AELRSMMSWL (146 aa)) form the KARI C-terminal knotted domain. Aspartate 191, glutamate 195, glutamate 227, and glutamate 231 together coordinate Mg(2+). Residue serine 252 participates in substrate binding.

This sequence belongs to the ketol-acid reductoisomerase family. Mg(2+) serves as cofactor.

It catalyses the reaction (2R)-2,3-dihydroxy-3-methylbutanoate + NADP(+) = (2S)-2-acetolactate + NADPH + H(+). The catalysed reaction is (2R,3R)-2,3-dihydroxy-3-methylpentanoate + NADP(+) = (S)-2-ethyl-2-hydroxy-3-oxobutanoate + NADPH + H(+). It functions in the pathway amino-acid biosynthesis; L-isoleucine biosynthesis; L-isoleucine from 2-oxobutanoate: step 2/4. The protein operates within amino-acid biosynthesis; L-valine biosynthesis; L-valine from pyruvate: step 2/4. Functionally, involved in the biosynthesis of branched-chain amino acids (BCAA). Catalyzes an alkyl-migration followed by a ketol-acid reduction of (S)-2-acetolactate (S2AL) to yield (R)-2,3-dihydroxy-isovalerate. In the isomerase reaction, S2AL is rearranged via a Mg-dependent methyl migration to produce 3-hydroxy-3-methyl-2-ketobutyrate (HMKB). In the reductase reaction, this 2-ketoacid undergoes a metal-dependent reduction by NADPH to yield (R)-2,3-dihydroxy-isovalerate. The protein is Ketol-acid reductoisomerase (NADP(+)) of Dehalococcoides mccartyi (strain CBDB1).